Consider the following 385-residue polypeptide: Protein delta homolog 1 (385 aa).

Residues 1–23 (MIATGALLRVLLLLLAFGHSTYG) form the signal peptide. EGF-like domains lie at 24 to 55 (AECD…PLCD), 53 to 86 (LCDK…KFCE), 88 to 125 (DVRA…KDCQ), 127 to 168 (KAGP…NFCE), 172 to 208 (ATNS…KTCS), and 210 to 247 (PVSN…PTCA). At 24 to 305 (AECDPPCDPQ…KSTPLLTEGQ (282 aa)) the chain is on the extracellular side. Cystine bridges form between C26–C37, C30–C43, C45–C54, C57–C68, C63–C74, C76–C85, C92–C103, C97–C113, C115–C124, C131–C144, C138–C156, and C158–C167. Residue S94 is glycosylated (O-linked (GalNAc...) serine). N-linked (GlcNAc...) asparagine glycosylation is present at N100. A glycan (N-linked (GlcNAc...) asparagine; atypical; partial) is linked at N165. N-linked (GlcNAc...) asparagine; atypical glycosylation occurs at N174. Cystine bridges form between C176–C187, C181–C196, C198–C207, C214–C225, C219–C235, and C237–C246. A glycan (O-linked (GalNAc...) serine) is linked at S216. O-linked (GalNAc...) threonine glycosylation occurs at T224. T258 carries an O-linked (GalNAc...) threonine glycan. O-linked (GalNAc...) threonine; partial glycosylation is present at T267. O-linked (GalNAc...) threonine glycosylation occurs at T271. N-linked (GlcNAc...) asparagine glycosylation occurs at N295. Residues 306-329 (AICFTILGVLTSLVVLGTVAIVFL) form a helical membrane-spanning segment. The Cytoplasmic portion of the chain corresponds to 330–385 (NKCETWVSNLRYNHTFRKKKNLLLQYNSGEELAVNIIFPEKIDMTTFNKEAGDEEI).

Monomer. Interacts with SH3RF2. In terms of processing, N- and O-glycosylated. In terms of tissue distribution, highly expressed in fetal liver, placenta, adult adrenal gland, brain, testis and ovary and, to a lesser degree, in adult kidney, muscle, thymus and heart.

The protein localises to the membrane. It localises to the cytoplasm. Its function is as follows. May have a role in neuroendocrine differentiation. Inhibits adipocyte differentiation. The sequence is that of Protein delta homolog 1 (Dlk1) from Mus musculus (Mouse).